Consider the following 217-residue polypeptide: Deoxyribose-phosphate aldolase (217 aa).

Asp89 functions as the Proton donor/acceptor in the catalytic mechanism. Residue Lys151 is the Schiff-base intermediate with acetaldehyde of the active site. Catalysis depends on Lys180, which acts as the Proton donor/acceptor.

The protein belongs to the DeoC/FbaB aldolase family. DeoC type 1 subfamily.

Its subcellular location is the cytoplasm. It carries out the reaction 2-deoxy-D-ribose 5-phosphate = D-glyceraldehyde 3-phosphate + acetaldehyde. Its pathway is carbohydrate degradation; 2-deoxy-D-ribose 1-phosphate degradation; D-glyceraldehyde 3-phosphate and acetaldehyde from 2-deoxy-alpha-D-ribose 1-phosphate: step 2/2. Catalyzes a reversible aldol reaction between acetaldehyde and D-glyceraldehyde 3-phosphate to generate 2-deoxy-D-ribose 5-phosphate. This chain is Deoxyribose-phosphate aldolase, found in Metamycoplasma arthritidis (strain 158L3-1) (Mycoplasma arthritidis).